The chain runs to 426 residues: Serine hydroxymethyltransferase (426 aa).

Residues L122 and 126 to 128 each bind (6S)-5,6,7,8-tetrahydrofolate; that span reads GHL. Position 231 is an N6-(pyridoxal phosphate)lysine (K231).

This sequence belongs to the SHMT family. As to quaternary structure, homodimer. The cofactor is pyridoxal 5'-phosphate.

The protein resides in the cytoplasm. The catalysed reaction is (6R)-5,10-methylene-5,6,7,8-tetrahydrofolate + glycine + H2O = (6S)-5,6,7,8-tetrahydrofolate + L-serine. It participates in one-carbon metabolism; tetrahydrofolate interconversion. It functions in the pathway amino-acid biosynthesis; glycine biosynthesis; glycine from L-serine: step 1/1. Its function is as follows. Catalyzes the reversible interconversion of serine and glycine with tetrahydrofolate (THF) serving as the one-carbon carrier. This reaction serves as the major source of one-carbon groups required for the biosynthesis of purines, thymidylate, methionine, and other important biomolecules. Also exhibits THF-independent aldolase activity toward beta-hydroxyamino acids, producing glycine and aldehydes, via a retro-aldol mechanism. The sequence is that of Serine hydroxymethyltransferase from Koribacter versatilis (strain Ellin345).